A 344-amino-acid polypeptide reads, in one-letter code: N-acetyl-gamma-glutamyl-phosphate reductase (344 aa).

The active site involves Cys-148.

This sequence belongs to the NAGSA dehydrogenase family. Type 1 subfamily.

It localises to the cytoplasm. The enzyme catalyses N-acetyl-L-glutamate 5-semialdehyde + phosphate + NADP(+) = N-acetyl-L-glutamyl 5-phosphate + NADPH + H(+). The protein operates within amino-acid biosynthesis; L-arginine biosynthesis; N(2)-acetyl-L-ornithine from L-glutamate: step 3/4. In terms of biological role, catalyzes the NADPH-dependent reduction of N-acetyl-5-glutamyl phosphate to yield N-acetyl-L-glutamate 5-semialdehyde. This Geobacillus thermodenitrificans (strain NG80-2) protein is N-acetyl-gamma-glutamyl-phosphate reductase.